A 185-amino-acid polypeptide reads, in one-letter code: HTH-type transcriptional regulator SA2364 (185 aa).

The 61-residue stretch at 6–66 (KENRQRIEEI…YVIQRDLDIF (61 aa)) folds into the HTH tetR-type domain. The H-T-H motif DNA-binding region spans 29-48 (SMNRIAKELGIGMGTLYRHF).

This is HTH-type transcriptional regulator SA2364 from Staphylococcus aureus (strain N315).